A 432-amino-acid polypeptide reads, in one-letter code: UDP-glucosyltransferase B1 (432 aa).

Belongs to the UDP-glycosyltransferase family.

It catalyses the reaction (9Z)-17-hydroxyoctadec-9-enoate 17-O-beta-D-glucoside + UDP-alpha-D-glucose = (9Z)-17-hydroxyoctadec-9-enoate 17-O-sophoroside + UDP + H(+). Functionally, catalyzes the second glycosylation step of sophorolipid biosynthesis, the further glucosylation of the previoulsy formed glucolipid to give rise to an acidic sophorolipid. In Starmerella bombicola (Yeast), this protein is UDP-glucosyltransferase B1.